The following is a 272-amino-acid chain: Ribosomal RNA small subunit methyltransferase A (272 aa).

The S-adenosyl-L-methionine site is built by histidine 10, leucine 12, glycine 37, glutamate 57, aspartate 82, and asparagine 98.

Belongs to the class I-like SAM-binding methyltransferase superfamily. rRNA adenine N(6)-methyltransferase family. RsmA subfamily.

Its subcellular location is the cytoplasm. The enzyme catalyses adenosine(1518)/adenosine(1519) in 16S rRNA + 4 S-adenosyl-L-methionine = N(6)-dimethyladenosine(1518)/N(6)-dimethyladenosine(1519) in 16S rRNA + 4 S-adenosyl-L-homocysteine + 4 H(+). In terms of biological role, specifically dimethylates two adjacent adenosines (A1518 and A1519) in the loop of a conserved hairpin near the 3'-end of 16S rRNA in the 30S particle. May play a critical role in biogenesis of 30S subunits. This chain is Ribosomal RNA small subunit methyltransferase A, found in Gloeobacter violaceus (strain ATCC 29082 / PCC 7421).